The chain runs to 482 residues: Aspartyl/glutamyl-tRNA(Asn/Gln) amidotransferase subunit B (482 aa).

This sequence belongs to the GatB/GatE family. GatB subfamily. As to quaternary structure, heterotrimer of A, B and C subunits.

The catalysed reaction is L-glutamyl-tRNA(Gln) + L-glutamine + ATP + H2O = L-glutaminyl-tRNA(Gln) + L-glutamate + ADP + phosphate + H(+). The enzyme catalyses L-aspartyl-tRNA(Asn) + L-glutamine + ATP + H2O = L-asparaginyl-tRNA(Asn) + L-glutamate + ADP + phosphate + 2 H(+). Its function is as follows. Allows the formation of correctly charged Asn-tRNA(Asn) or Gln-tRNA(Gln) through the transamidation of misacylated Asp-tRNA(Asn) or Glu-tRNA(Gln) in organisms which lack either or both of asparaginyl-tRNA or glutaminyl-tRNA synthetases. The reaction takes place in the presence of glutamine and ATP through an activated phospho-Asp-tRNA(Asn) or phospho-Glu-tRNA(Gln). The chain is Aspartyl/glutamyl-tRNA(Asn/Gln) amidotransferase subunit B from Azotobacter vinelandii (strain DJ / ATCC BAA-1303).